The sequence spans 392 residues: Elongation factor Tu 2 (392 aa).

One can recognise a tr-type G domain in the interval 10-201 (KPHVNIGTIG…AVDSYIPTPE (192 aa)). The segment at 19–26 (GHVDHGKT) is G1. 19–26 (GHVDHGKT) provides a ligand contact to GTP. Thr26 provides a ligand contact to Mg(2+). The segment at 55–59 (GITIS) is G2. The interval 76-79 (DCPG) is G3. GTP contacts are provided by residues 76–80 (DCPGH) and 131–134 (NKVD). The G4 stretch occupies residues 131–134 (NKVD). The segment at 169–171 (SAL) is G5.

Belongs to the TRAFAC class translation factor GTPase superfamily. Classic translation factor GTPase family. EF-Tu/EF-1A subfamily. Monomer.

The protein localises to the cytoplasm. It catalyses the reaction GTP + H2O = GDP + phosphate + H(+). In terms of biological role, GTP hydrolase that promotes the GTP-dependent binding of aminoacyl-tRNA to the A-site of ribosomes during protein biosynthesis. In Rhizobium etli (strain ATCC 51251 / DSM 11541 / JCM 21823 / NBRC 15573 / CFN 42), this protein is Elongation factor Tu 2.